The following is a 636-amino-acid chain: 1-deoxy-D-xylulose-5-phosphate synthase (636 aa).

Residues His72 and Gly113–Ala115 contribute to the thiamine diphosphate site. Residue Asp144 participates in Mg(2+) binding. Thiamine diphosphate-binding positions include Gly145–Ser146, Asn174, Tyr287, and Glu370. Asn174 contacts Mg(2+).

The protein belongs to the transketolase family. DXPS subfamily. Homodimer. Mg(2+) serves as cofactor. Requires thiamine diphosphate as cofactor.

It carries out the reaction D-glyceraldehyde 3-phosphate + pyruvate + H(+) = 1-deoxy-D-xylulose 5-phosphate + CO2. The protein operates within metabolic intermediate biosynthesis; 1-deoxy-D-xylulose 5-phosphate biosynthesis; 1-deoxy-D-xylulose 5-phosphate from D-glyceraldehyde 3-phosphate and pyruvate: step 1/1. In terms of biological role, catalyzes the acyloin condensation reaction between C atoms 2 and 3 of pyruvate and glyceraldehyde 3-phosphate to yield 1-deoxy-D-xylulose-5-phosphate (DXP). The polypeptide is 1-deoxy-D-xylulose-5-phosphate synthase (Synechococcus sp. (strain ATCC 27144 / PCC 6301 / SAUG 1402/1) (Anacystis nidulans)).